The following is a 719-amino-acid chain: MPVEYDPKTGLINLHNDQISYVIQILAHRYPVHRYFGRYFSKQPYFEPMPSGSHAFANDPTERFPYSVTSLPLEYSTIGSGDYRQPAYVIKDANNQLLPILEYTGFSVNDQPINSRQLPPTVSKHTPVTTLVIHLTDAVTKLQMDLNYTIFENQPLILRSTTLRHHGTTNLQVTALSSAQLDLPTDQYTALTLSGTHAHEANPSFNRLHPGLQTVRSLRGTSGPQHQPFMALAEPNTTELAGTVIGCALAWSGNFDSTVEVDQYQHSRLTIGLEPDTFEWQLKPNSSFQTPEAVLTWTNTGFNGMSQVFHDFSYQLMPSQTNIPSVLNTWETLTFAVSESKVQHLIEHAHQLGLQMLVLDDGWFVNRNGENGQLGDWFVDPIKFPNGLNPLAQQAHHHRMKFGLWVEPEMITTNSQLYQQHPDWVLQYVDRTPITARHQLVLDLSQAAVRDHLITTLTNLVQNNQLDYLKWDMNRHLTQVGSTHLPAAQQGELYHRYVCGLYDILTRLKRACPKLIIENCSAGGGRFDFGMLPYTNQTWISDLTDPVDRATIENGFSYLFPPRIFSNHITASPNAQNGRITPFETRLQLACIGQLGLELNPKQLAPSEQQLLRGALIKYQQLKSTFIKAHFYRLPTTRHVVAWLIVTADKKQAICCYLNGLNSRVKTQHPLPLHYLDAELAYSDSSGNRYTGHQLNTMGIPLKPTNADFTSQLIYLCQN.

Aspartate 472 serves as the catalytic Nucleophile. Aspartate 542 acts as the Proton donor in catalysis.

It belongs to the glycosyl hydrolase 36 family.

The catalysed reaction is Hydrolysis of terminal, non-reducing alpha-D-galactose residues in alpha-D-galactosides, including galactose oligosaccharides, galactomannans and galactolipids.. In terms of biological role, alpha-galactosidase associated with the sucrase operon. In Pediococcus pentosaceus, this protein is Alpha-galactosidase 2 (agaS).